Reading from the N-terminus, the 390-residue chain is Serpin B4 (390 aa).

At M1 the chain carries N-acetylmethionine.

Belongs to the serpin family. Ov-serpin subfamily. In terms of tissue distribution, squamous cells.

Its subcellular location is the cytoplasm. Its function is as follows. May act as a protease inhibitor to modulate the host immune response against tumor cells. This chain is Serpin B4 (SERPINB4), found in Homo sapiens (Human).